Reading from the N-terminus, the 201-residue chain is Ribonuclease HII (201 aa).

The 190-residue stretch at 12–201 folds into the RNase H type-2 domain; that stretch reads DLVAGVDEVG…VRELLDVPVQ (190 aa). A divalent metal cation contacts are provided by Asp18, Glu19, and Asp110.

The protein belongs to the RNase HII family. Mn(2+) is required as a cofactor. It depends on Mg(2+) as a cofactor.

The protein localises to the cytoplasm. It catalyses the reaction Endonucleolytic cleavage to 5'-phosphomonoester.. Functionally, endonuclease that specifically degrades the RNA of RNA-DNA hybrids. The sequence is that of Ribonuclease HII from Pseudomonas aeruginosa (strain UCBPP-PA14).